We begin with the raw amino-acid sequence, 141 residues long: HTH-type transcriptional repressor NsrR (141 aa).

The HTH rrf2-type domain occupies 2-129 (QLTSFTDYGL…DNYTLADLVE (128 aa)). The segment at residues 28-51 (ISEVTDVYGVSRNHMVKIINQLSR) is a DNA-binding region (H-T-H motif). Residues cysteine 91, cysteine 96, and cysteine 102 each coordinate [2Fe-2S] cluster.

The cofactor is [2Fe-2S] cluster.

Its function is as follows. Nitric oxide-sensitive repressor of genes involved in protecting the cell against nitrosative stress. May require iron for activity. The sequence is that of HTH-type transcriptional repressor NsrR from Escherichia coli O157:H7 (strain EC4115 / EHEC).